Here is a 329-residue protein sequence, read N- to C-terminus: Octaprenyl diphosphate synthase (329 aa).

Positions 51, 54, and 83 each coordinate isopentenyl diphosphate. Residues aspartate 90 and aspartate 94 each coordinate Mg(2+). An an all-trans-polyprenyl diphosphate-binding site is contributed by arginine 99. Residue arginine 100 coordinates isopentenyl diphosphate. Residues lysine 176, threonine 177, and glutamine 214 each contribute to the an all-trans-polyprenyl diphosphate site.

The protein belongs to the FPP/GGPP synthase family. Mg(2+) serves as cofactor.

The enzyme catalyses 5 isopentenyl diphosphate + (2E,6E)-farnesyl diphosphate = all-trans-octaprenyl diphosphate + 5 diphosphate. Its function is as follows. Supplies octaprenyl diphosphate, the precursor for the side chain of the isoprenoid quinones ubiquinone and menaquinone. The sequence is that of Octaprenyl diphosphate synthase (ispB) from Haemophilus influenzae (strain ATCC 51907 / DSM 11121 / KW20 / Rd).